The primary structure comprises 83 residues: Cytochrome b559 subunit alpha (83 aa).

Residues 21 to 35 (VIHSITIPSLFIAGW) traverse the membrane as a helical segment. H23 provides a ligand contact to heme.

Belongs to the PsbE/PsbF family. As to quaternary structure, heterodimer of an alpha subunit and a beta subunit. PSII is composed of 1 copy each of membrane proteins PsbA, PsbB, PsbC, PsbD, PsbE, PsbF, PsbH, PsbI, PsbJ, PsbK, PsbL, PsbM, PsbT, PsbX, PsbY, PsbZ, Psb30/Ycf12, at least 3 peripheral proteins of the oxygen-evolving complex and a large number of cofactors. It forms dimeric complexes. Requires heme b as cofactor.

It localises to the plastid. The protein localises to the chloroplast thylakoid membrane. Its function is as follows. This b-type cytochrome is tightly associated with the reaction center of photosystem II (PSII). PSII is a light-driven water:plastoquinone oxidoreductase that uses light energy to abstract electrons from H(2)O, generating O(2) and a proton gradient subsequently used for ATP formation. It consists of a core antenna complex that captures photons, and an electron transfer chain that converts photonic excitation into a charge separation. The protein is Cytochrome b559 subunit alpha of Panax ginseng (Korean ginseng).